A 105-amino-acid chain; its full sequence is Prokineticin-1 (105 aa).

The signal sequence occupies residues 1 to 19; sequence MRGAVQVFIMLLLATVSDC. Intrachain disulfides connect C26–C38, C32–C50, C37–C78, C60–C86, and C80–C96.

It belongs to the AVIT (prokineticin) family.

It localises to the secreted. Potently contracts gastrointestinal (GI) smooth muscle. Induces proliferation, migration and fenestration (the formation of membrane discontinuities) in capillary endothelial cells derived from endocrine glands. Has little or no effect on a variety of other endothelial and non-endothelial cell types. Induces proliferation and differentiation, but not migration, of enteric neural crest cells. Directly influences neuroblastoma progression by promoting the proliferation and migration of neuroblastoma cells. Positively regulates PTGS2 expression and prostaglandin synthesis. May play a role in placentation. May play a role in normal and pathological testis angiogenesis. The sequence is that of Prokineticin-1 (Prok1) from Rattus norvegicus (Rat).